We begin with the raw amino-acid sequence, 872 residues long: Probable GPI-anchored adhesin-like protein PGA25 (872 aa).

A signal peptide spans 1-19 (MKVTAVSSVLLTVAALTNA). The segment covering 43 to 65 (PAAAPAAQPAAQPTTQSPADQPT) has biased composition (low complexity). Disordered stretches follow at residues 43–383 (PAAA…TIIP), 492–517 (KPTGSGSITVLPTKSTTTDDDDDETD), and 623–809 (PDDW…ECDT). Over residues 66–83 (VQSPVSSDQPSTAQPVAQ) the composition is skewed to polar residues. Composition is skewed to low complexity over residues 84 to 110 (NNLLLDSSNSTLVVPSSSKSSTTTRST) and 125 to 171 (SSEA…SSSS). N-linked (GlcNAc...) asparagine glycosylation occurs at N92. The span at 196–207 (ETDDEDCVEETE) shows a compositional bias: acidic residues. Composition is skewed to low complexity over residues 208-225 (SPTSAPASAPTTSKVATT), 242-260 (SSAPISSAESSPTVASSTT), and 274-293 (SSVPSSSAETSTTVASNTTT). N-linked (GlcNAc...) asparagine glycosylation occurs at N290. Over residues 317 to 328 (AEEDDEECEDPT) the composition is skewed to acidic residues. Positions 349–363 (TSQSKTSVSSVVSKS) are enriched in low complexity. The segment covering 366-376 (EDDDDETECET) has biased composition (acidic residues). The span at 495–506 (GSGSITVLPTKS) shows a compositional bias: polar residues. Acidic residues-rich tracts occupy residues 624-635 (DDWEDDGYEGED) and 646-659 (DDGEWEWYEEDDGE). 3 stretches are compositionally biased toward gly residues: residues 666-692 (SSSGSGTGSWWGSGAGSSGGTTSGSGS), 701-710 (SSGGTWGGSG), and 731-740 (SWWGGSGSGS). The segment covering 741 to 760 (SSGSSSGVSSGDSGSSSVTG) has biased composition (low complexity). Residues 761–771 (GSSGSWWGGSG) show a composition bias toward gly residues. Acidic residues predominate over residues 780–808 (DGYDDEDDQTPEPECDDEDDSWDDDEECD). The GPI-anchor amidated alanine moiety is linked to residue A845. Positions 846–872 (QSVTQIENIGGKVSASGLFVVLGLLLI) are cleaved as a propeptide — removed in mature form.

Belongs to the HYR1/IFF family. The GPI-anchor is attached to the protein in the endoplasmic reticulum and serves to target the protein to the cell surface. There, the glucosamine-inositol phospholipid moiety is cleaved off and the GPI-modified mannoprotein is covalently attached via its lipidless GPI glycan remnant to the 1,6-beta-glucan of the outer cell wall layer.

It localises to the secreted. Its subcellular location is the cell wall. It is found in the membrane. Its function is as follows. Probable GPI-anchored cell wall protein involved in cell wall organization, hyphal growth, as well as in host-fungal interaction and virulence. The protein is Probable GPI-anchored adhesin-like protein PGA25 (PGA25) of Candida albicans (strain SC5314 / ATCC MYA-2876) (Yeast).